The sequence spans 316 residues: Delta(1)-pyrroline-2-carboxylate reductase (316 aa).

The protein belongs to the ornithine cyclodeaminase/mu-crystallin family. Homodimer.

The enzyme catalyses L-proline + NAD(+) = 1-pyrroline-2-carboxylate + NADH + H(+). It carries out the reaction L-proline + NADP(+) = 1-pyrroline-2-carboxylate + NADPH + H(+). Its function is as follows. Catalyzes the reduction of Delta(1)-pyrroline-2-carboxylate (Pyr2C) to L-proline, using preferentially NADPH over NADH as the electron donor. Together with LhpH, is involved in a metabolic pathway that converts trans-3-hydroxy-L-proline (t3LHyp) to L-proline. To a much lesser extent, can also reduce Delta(1)-piperideine-2-carboxylate (Pip2C) to L-pipecolate in vitro; however, this activity has likely no physiological significance in vivo since C.psychrerythraea probably possesses no ability to metabolize D-lysine via the L-pipecolate pathway. Does not show ornithine cyclodeaminase (OCD) activity. In Colwellia psychrerythraea (strain 34H / ATCC BAA-681) (Vibrio psychroerythus), this protein is Delta(1)-pyrroline-2-carboxylate reductase.